A 366-amino-acid polypeptide reads, in one-letter code: 3-isopropylmalate dehydrogenase (366 aa).

78–91 contacts NAD(+); that stretch reads GPKWEDLPSHLQPE. Positions 99, 109, 138, and 227 each coordinate substrate. Asp227, Asp251, and Asp255 together coordinate Mg(2+). Residue 285-297 coordinates NAD(+); sequence GSAPDIKGKNIAN.

Belongs to the isocitrate and isopropylmalate dehydrogenases family. LeuB type 1 subfamily. As to quaternary structure, homodimer. Mg(2+) is required as a cofactor. The cofactor is Mn(2+).

The protein resides in the cytoplasm. It carries out the reaction (2R,3S)-3-isopropylmalate + NAD(+) = 4-methyl-2-oxopentanoate + CO2 + NADH. It functions in the pathway amino-acid biosynthesis; L-leucine biosynthesis; L-leucine from 3-methyl-2-oxobutanoate: step 3/4. In terms of biological role, catalyzes the oxidation of 3-carboxy-2-hydroxy-4-methylpentanoate (3-isopropylmalate) to 3-carboxy-4-methyl-2-oxopentanoate. The product decarboxylates to 4-methyl-2 oxopentanoate. This Buchnera aphidicola subsp. Baizongia pistaciae (strain Bp) protein is 3-isopropylmalate dehydrogenase.